The sequence spans 414 residues: uncharacterized protein (414 aa).

A signal peptide spans 1-20 (MKKLLAIGILCIMVTAVMSG). Cys-21 carries S-archaeol cysteine lipidation. Residues 119–389 (RVIVMSSTEI…DLATILHPEA (271 aa)) form the Fe/B12 periplasmic-binding domain.

It is found in the cell membrane. This is an uncharacterized protein from Methanocaldococcus jannaschii (strain ATCC 43067 / DSM 2661 / JAL-1 / JCM 10045 / NBRC 100440) (Methanococcus jannaschii).